Here is a 359-residue protein sequence, read N- to C-terminus: L-seryl-tRNA(Sec) kinase (359 aa).

Residue 25–32 (GLPAAGKS) coordinates ATP.

The protein belongs to the L-seryl-tRNA(Sec) kinase family. Requires Mg(2+) as cofactor.

It carries out the reaction L-seryl-tRNA(Sec) + ATP = O-phospho-L-seryl-tRNA(Sec) + ADP. The protein operates within aminoacyl-tRNA biosynthesis; selenocysteinyl-tRNA(Sec) biosynthesis; selenocysteinyl-tRNA(Sec) from L-seryl-tRNA(Sec) (archaeal/eukaryal route): step 1/2. In terms of biological role, specifically phosphorylates seryl-tRNA(Sec) to O-phosphoseryl-tRNA(Sec), an activated intermediate for selenocysteine biosynthesis. No activity with other tRNAs has been detected. This Mus musculus (Mouse) protein is L-seryl-tRNA(Sec) kinase (Pstk).